The sequence spans 50 residues: Large ribosomal subunit protein eL39 (50 aa).

Over residues 1–12 the composition is skewed to basic residues; that stretch reads MGKKSKAKKKRL. The disordered stretch occupies residues 1-21; the sequence is MGKKSKAKKKRLGKLEKQNSR.

Belongs to the eukaryotic ribosomal protein eL39 family.

The polypeptide is Large ribosomal subunit protein eL39 (Haloquadratum walsbyi (strain DSM 16790 / HBSQ001)).